A 370-amino-acid polypeptide reads, in one-letter code: tRNA-specific 2-thiouridylase MnmA (370 aa).

ATP is bound by residues 6–13 (AMSGGVDS) and Leu-32. The active-site Nucleophile is the Cys-101. Cys-101 and Cys-193 are joined by a disulfide. Gly-125 serves as a coordination point for ATP. The interval 143 to 145 (KDQ) is interaction with tRNA. The Cysteine persulfide intermediate role is filled by Cys-193.

It belongs to the MnmA/TRMU family.

It is found in the cytoplasm. It catalyses the reaction S-sulfanyl-L-cysteinyl-[protein] + uridine(34) in tRNA + AH2 + ATP = 2-thiouridine(34) in tRNA + L-cysteinyl-[protein] + A + AMP + diphosphate + H(+). Its function is as follows. Catalyzes the 2-thiolation of uridine at the wobble position (U34) of tRNA, leading to the formation of s(2)U34. This Rhodococcus erythropolis (strain PR4 / NBRC 100887) protein is tRNA-specific 2-thiouridylase MnmA.